The primary structure comprises 169 residues: MRKRQPVLKQEKTLNPELKTWLYASGSLTQQLTELGGGKFSVKPFKEHFQRLTFADSQWMNMPHTHTSWVRETYLYGSDVEPWVKAKSIFPIQSLQKKARIFQHIGSKPIGLFLFQRTTPLCDRRVIRLPEGWTRQSCYTWHGCKFIVQETFLPAFEAFLYQQHDKELL.

The substrate site is built by arginine 71, isoleucine 110, and glutamate 150.

This sequence belongs to the UbiC family.

It localises to the cytoplasm. The catalysed reaction is chorismate = 4-hydroxybenzoate + pyruvate. It participates in cofactor biosynthesis; ubiquinone biosynthesis. In terms of biological role, removes the pyruvyl group from chorismate, with concomitant aromatization of the ring, to provide 4-hydroxybenzoate (4HB) for the ubiquinone pathway. The sequence is that of Probable chorismate pyruvate-lyase from Acinetobacter baumannii (strain ATCC 17978 / DSM 105126 / CIP 53.77 / LMG 1025 / NCDC KC755 / 5377).